Here is a 425-residue protein sequence, read N- to C-terminus: MLDLKRIRTDFDTVAAKLKNRGVSEDTLTHLKELDEKRRTLLVQSEELKAERNIASAAIAQAKRQKEGATQQIADMQKVSADIKTIDNQLVAIDQQVADIITVLPNTPHDSVPVGADEEDNVEIRRWGTPRDFDFEVKAHWNLGEDLDILDWERGAKVTGARFLFYKNLGARLERALYNFMLDEHIKEGYQEIITPYMVNHDSMFGTGQYPKFKEDTFELADTNFVLIPTAEVPLTNYYRGEILDGKELPIYFTAMSPSFRSEAGSAGRDTRGLIRLHQFHKVEMVKFAKPEESYQELEKMTANAENILQKLGLPYRVISLCTGDMGFSAAKTYDLEVWIPAQNTYREISSCSNTEDFQARRAQIRYRDEADGKVKLLHTLNGSGLAVGRTVAAILENYQNEDGSVTIPEVLRPYMGGETVISPK.

230 to 232 lines the L-serine pocket; sequence TAE. 261–263 contributes to the ATP binding site; sequence RSE. Glutamate 284 contributes to the L-serine binding site. 348–351 is a binding site for ATP; it reads EISS. Residue serine 384 coordinates L-serine.

This sequence belongs to the class-II aminoacyl-tRNA synthetase family. Type-1 seryl-tRNA synthetase subfamily. In terms of assembly, homodimer. The tRNA molecule binds across the dimer.

The protein localises to the cytoplasm. The catalysed reaction is tRNA(Ser) + L-serine + ATP = L-seryl-tRNA(Ser) + AMP + diphosphate + H(+). It carries out the reaction tRNA(Sec) + L-serine + ATP = L-seryl-tRNA(Sec) + AMP + diphosphate + H(+). Its pathway is aminoacyl-tRNA biosynthesis; selenocysteinyl-tRNA(Sec) biosynthesis; L-seryl-tRNA(Sec) from L-serine and tRNA(Sec): step 1/1. In terms of biological role, catalyzes the attachment of serine to tRNA(Ser). Is also able to aminoacylate tRNA(Sec) with serine, to form the misacylated tRNA L-seryl-tRNA(Sec), which will be further converted into selenocysteinyl-tRNA(Sec). The sequence is that of Serine--tRNA ligase from Streptococcus pyogenes serotype M2 (strain MGAS10270).